The sequence spans 289 residues: CRISPR system Cms protein Csm4 (289 aa).

This sequence belongs to the CRISPR-associated Csm4 family. As to quaternary structure, probably part of the Csm effector complex, that includes Cas10, Csm2, Csm3, Csm4, Csm5 and mature crRNA. Interacts with Cas10 (csm1).

Functionally, CRISPR (clustered regularly interspaced short palindromic repeat) is an adaptive immune system that provides protection against mobile genetic elements (viruses, transposable elements and conjugative plasmids). CRISPR clusters contain spacers, sequences complementary to antecedent mobile elements, and target invading nucleic acids. CRISPR clusters are transcribed and processed into CRISPR RNA (crRNA). The type III-A Csm effector complex binds crRNA and acts as a crRNA-guided RNase, DNase and cyclic oligoadenylate synthase; binding of target RNA cognate to the crRNA is required for all activities. The subunit probably binds to the 5' handle of the crRNA, helping in discrimination between self- and non-self. This Thermococcus onnurineus (strain NA1) protein is CRISPR system Cms protein Csm4.